The following is a 433-amino-acid chain: Serine--tRNA ligase (433 aa).

Residue 235–237 participates in L-serine binding; sequence TSE. 266–268 is an ATP binding site; sequence RSE. Glu289 lines the L-serine pocket. 353 to 356 contributes to the ATP binding site; that stretch reads EISS. Residue Ser388 participates in L-serine binding.

The protein belongs to the class-II aminoacyl-tRNA synthetase family. Type-1 seryl-tRNA synthetase subfamily. In terms of assembly, homodimer. The tRNA molecule binds across the dimer.

It localises to the cytoplasm. The enzyme catalyses tRNA(Ser) + L-serine + ATP = L-seryl-tRNA(Ser) + AMP + diphosphate + H(+). It carries out the reaction tRNA(Sec) + L-serine + ATP = L-seryl-tRNA(Sec) + AMP + diphosphate + H(+). It participates in aminoacyl-tRNA biosynthesis; selenocysteinyl-tRNA(Sec) biosynthesis; L-seryl-tRNA(Sec) from L-serine and tRNA(Sec): step 1/1. Its function is as follows. Catalyzes the attachment of serine to tRNA(Ser). Is also able to aminoacylate tRNA(Sec) with serine, to form the misacylated tRNA L-seryl-tRNA(Sec), which will be further converted into selenocysteinyl-tRNA(Sec). The chain is Serine--tRNA ligase from Burkholderia pseudomallei (strain 668).